The chain runs to 318 residues: Acetyl-coenzyme A carboxylase carboxyl transferase subunit alpha (318 aa).

Positions 39–292 (LTDKSEKQLR…GDSIAAELPD (254 aa)) constitute a CoA carboxyltransferase C-terminal domain.

The protein belongs to the AccA family. Acetyl-CoA carboxylase is a heterohexamer composed of biotin carboxyl carrier protein (AccB), biotin carboxylase (AccC) and two subunits each of ACCase subunit alpha (AccA) and ACCase subunit beta (AccD).

Its subcellular location is the cytoplasm. The enzyme catalyses N(6)-carboxybiotinyl-L-lysyl-[protein] + acetyl-CoA = N(6)-biotinyl-L-lysyl-[protein] + malonyl-CoA. The protein operates within lipid metabolism; malonyl-CoA biosynthesis; malonyl-CoA from acetyl-CoA: step 1/1. In terms of biological role, component of the acetyl coenzyme A carboxylase (ACC) complex. First, biotin carboxylase catalyzes the carboxylation of biotin on its carrier protein (BCCP) and then the CO(2) group is transferred by the carboxyltransferase to acetyl-CoA to form malonyl-CoA. In Gluconacetobacter diazotrophicus (strain ATCC 49037 / DSM 5601 / CCUG 37298 / CIP 103539 / LMG 7603 / PAl5), this protein is Acetyl-coenzyme A carboxylase carboxyl transferase subunit alpha.